We begin with the raw amino-acid sequence, 1091 residues long: Protein JSN1 (1091 aa).

2 disordered regions span residues 31 to 51 (EYENNGESNSQLQQQPQKLGS) and 75 to 131 (HHSK…GSLT). Residues 99–111 (TVASKTPRASPSR) show a composition bias toward polar residues. Serine 129 carries the post-translational modification Phosphoserine. Threonine 131 is modified (phosphothreonine). A phosphoserine mark is found at serine 160 and serine 168. The region spanning 340–426 (NTISISNVFP…APSKISFAKI (87 aa)) is the RRM domain. Composition is skewed to low complexity over residues 482 to 494 (QQSQQSQHQNHSS) and 507 to 520 (NNNNSMHGNNNNSA). Disordered regions lie at residues 482–534 (QQSQ…PPPN) and 568–591 (HKGTSDTQNFGPLPEPLSGREFDP). The PUM-HD domain occupies 557-913 (QINSLIKKSL…RLLEEVGLAS (357 aa)). Over residues 568–577 (HKGTSDTQNF) the composition is skewed to polar residues. Pumilio repeat units lie at residues 617–652 (AMLDELPELSSDYLGNTIVQKLFEHSSDIIKDIMLR), 653–689 (KTSKYLTSMGVHKNGTWACQKMITMAHTPRQIMQVTQ), 690–724 (GVKDYCTPLINDQFGNYVIQCVLKFGFPWNQFIFE), 725–760 (SIIANFWVIVQNRYGARAVRACLEAHDIVTPEQSIV), and 801–837 (RLTKRIVELCGHRLASLTILKVLNYRGDDNARKIILD). The tract at residues 911–981 (LASPSSTHNK…GSSASTLSPG (71 aa)) is disordered. Position 913 is a phosphoserine (serine 913). Composition is skewed to low complexity over residues 915 to 935 (SSTHNKTKQQQQQHHNSSISH) and 951 to 979 (SVSSVKSGGSKHTTMNTTTTNGSSASTLS).

The sequence is that of Protein JSN1 (JSN1) from Saccharomyces cerevisiae (strain ATCC 204508 / S288c) (Baker's yeast).